The sequence spans 182 residues: Ribosome-recycling factor (182 aa).

The protein belongs to the RRF family.

It localises to the cytoplasm. In terms of biological role, responsible for the release of ribosomes from messenger RNA at the termination of protein biosynthesis. May increase the efficiency of translation by recycling ribosomes from one round of translation to another. This Synechococcus sp. (strain JA-2-3B'a(2-13)) (Cyanobacteria bacterium Yellowstone B-Prime) protein is Ribosome-recycling factor.